Here is a 123-residue protein sequence, read N- to C-terminus: Large ribosomal subunit protein uL18 (123 aa).

It belongs to the universal ribosomal protein uL18 family. Part of the 50S ribosomal subunit; part of the 5S rRNA/L5/L18/L25 subcomplex. Contacts the 5S and 23S rRNAs.

This is one of the proteins that bind and probably mediate the attachment of the 5S RNA into the large ribosomal subunit, where it forms part of the central protuberance. The protein is Large ribosomal subunit protein uL18 of Protochlamydia amoebophila (strain UWE25).